The following is a 387-amino-acid chain: Protein PHYTOCHROME KINASE SUBSTRATE 3 (387 aa).

3 disordered regions span residues 1-21 (MDAEKKSAHFRQISSYKPQLL), 74-128 (HEKE…CNSQ), and 242-271 (LSTKNNNHNNNGNNSSMSSNTQEEETASVA). Residues 12 to 21 (QISSYKPQLL) are compositionally biased toward polar residues. Residues 74–83 (HEKENTHDHP) are compositionally biased toward basic and acidic residues. A compositionally biased stretch (polar residues) spans 114–128 (HGTPSVRSESSCNSQ). Residues 242–261 (LSTKNNNHNNNGNNSSMSSN) show a composition bias toward low complexity.

This sequence belongs to the PKS family.

Functionally, probably involved in the phytochrome signaling pathway. This chain is Protein PHYTOCHROME KINASE SUBSTRATE 3 (PKS3), found in Arabidopsis thaliana (Mouse-ear cress).